Reading from the N-terminus, the 296-residue chain is Formamidopyrimidine-DNA glycosylase (296 aa).

Catalysis depends on proline 2, which acts as the Schiff-base intermediate with DNA. The active-site Proton donor is the glutamate 3. Catalysis depends on lysine 58, which acts as the Proton donor; for beta-elimination activity. Residues histidine 104, arginine 126, and lysine 169 each coordinate DNA. The FPG-type zinc finger occupies 260 to 296 (SVYDRAGEACRKPGCDGTVTRIVQAGRSTFHCPRCQK). The active-site Proton donor; for delta-elimination activity is arginine 286.

Belongs to the FPG family. Monomer. Requires Zn(2+) as cofactor.

The catalysed reaction is Hydrolysis of DNA containing ring-opened 7-methylguanine residues, releasing 2,6-diamino-4-hydroxy-5-(N-methyl)formamidopyrimidine.. It carries out the reaction 2'-deoxyribonucleotide-(2'-deoxyribose 5'-phosphate)-2'-deoxyribonucleotide-DNA = a 3'-end 2'-deoxyribonucleotide-(2,3-dehydro-2,3-deoxyribose 5'-phosphate)-DNA + a 5'-end 5'-phospho-2'-deoxyribonucleoside-DNA + H(+). In terms of biological role, involved in base excision repair of DNA damaged by oxidation or by mutagenic agents. Acts as a DNA glycosylase that recognizes and removes damaged bases. Has a preference for oxidized purines, such as 7,8-dihydro-8-oxoguanine (8-oxoG). Has AP (apurinic/apyrimidinic) lyase activity and introduces nicks in the DNA strand. Cleaves the DNA backbone by beta-delta elimination to generate a single-strand break at the site of the removed base with both 3'- and 5'-phosphates. This chain is Formamidopyrimidine-DNA glycosylase, found in Sinorhizobium fredii (strain NBRC 101917 / NGR234).